Reading from the N-terminus, the 67-residue chain is Guanine nucleotide-binding protein G(I)/G(S)/G(O) subunit gamma-13 (67 aa).

Cysteine methyl ester is present on Cys-64. A lipid anchor (S-farnesyl cysteine) is attached at Cys-64. A propeptide spans 65 to 67 (TIL) (removed in mature form).

This sequence belongs to the G protein gamma family. As to quaternary structure, g proteins are composed of 3 units, alpha, beta and gamma.

The protein resides in the cell membrane. Guanine nucleotide-binding proteins (G proteins) are involved as a modulator or transducer in various transmembrane signaling systems. The beta and gamma chains are required for the GTPase activity, for replacement of GDP by GTP, and for G protein-effector interaction. This is Guanine nucleotide-binding protein G(I)/G(S)/G(O) subunit gamma-13 (GNG13) from Homo sapiens (Human).